Consider the following 106-residue polypeptide: Large ribosomal subunit protein eL30 (106 aa).

The protein belongs to the eukaryotic ribosomal protein eL30 family. In terms of assembly, component of the large ribosomal subunit. Mature ribosomes consist of a small (40S) and a large (60S) subunit. The 40S subunit contains about 32 different proteins and 1 molecule of RNA (18S). The 60S subunit contains 45 different proteins and 3 molecules of RNA (25S, 5.8S and 5S).

It localises to the cytoplasm. In terms of biological role, component of the ribosome, a large ribonucleoprotein complex responsible for the synthesis of proteins in the cell. The small ribosomal subunit (SSU) binds messenger RNAs (mRNAs) and translates the encoded message by selecting cognate aminoacyl-transfer RNA (tRNA) molecules. The large subunit (LSU) contains the ribosomal catalytic site termed the peptidyl transferase center (PTC), which catalyzes the formation of peptide bonds, thereby polymerizing the amino acids delivered by tRNAs into a polypeptide chain. The nascent polypeptides leave the ribosome through a tunnel in the LSU and interact with protein factors that function in enzymatic processing, targeting, and the membrane insertion of nascent chains at the exit of the ribosomal tunnel. In Candida albicans (strain SC5314 / ATCC MYA-2876) (Yeast), this protein is Large ribosomal subunit protein eL30.